The chain runs to 184 residues: DOMON domain-containing protein CBG21755 (184 aa).

The first 20 residues, 1–20, serve as a signal peptide directing secretion; it reads MIVPISLLFLFLSFVPFSYS. Positions 28-145 constitute a DOMON domain; the sequence is EVASMSWMVK…CVNWIVVPGG (118 aa). Asn49 carries N-linked (GlcNAc...) asparagine glycosylation.

The protein resides in the secreted. The chain is DOMON domain-containing protein CBG21755 from Caenorhabditis briggsae.